Here is a 342-residue protein sequence, read N- to C-terminus: MSNAVSSSVFGEKNNSVAYELPWVEKYRPIVLDDIVGNEETIDRLKVIAKEGNMPHLVISGMPGIGKTTSILCLAHALLGPAYKEGVLELNASDERGIDVVRNRIKAFAQKKVILPPGRHKIIILDEADSMTAGAQQALRRTMEIYSNTTRFALACNQSNKIIEPIQSRCAILRYSRLTDQQVLQRLLNICKAEKVNYTDDGLAALIMTAEGDMRQAVNNLQSTVAGFGLVNGENVFRVADQPSPVAIHAMLTACQSGNIDVALEKLQGIWDLGFSAVDIVTNMFRVVKTMDSIPEFSRLEMLKEIGQTHMIILEGVQTLLQLSGLVCRLAKSQMKPESFII.

ATP is bound by residues V24, V36, G61–T68, N157, and R215.

Belongs to the activator 1 small subunits family. As to quaternary structure, heteropentamer of subunits rfc1, rfc2, rfc3, rfc4 and rfc5 that forms a complex (RFC) with PCNA in the presence of ATP. Two other complexes exist where rfc1 can be replaced by either ctf18 or elg1 to form the ctf18-RFC or the elg1-RFC complexes respectively.

Its subcellular location is the nucleus. Its function is as follows. The elongation of primed DNA templates by DNA polymerase delta and epsilon requires the action of the accessory proteins PCNA and activator 1. In Schizosaccharomyces pombe (strain 972 / ATCC 24843) (Fission yeast), this protein is Replication factor C subunit 4 (rfc4).